Reading from the N-terminus, the 119-residue chain is MSPSVALAVLALLSLSGLEAIQRTPKIQVYSRHPPENGKPNFLNCYVSGFHPSDIEVDLLKNGEKMGKVEHSDLSFSKDWSFYLLYYTEFTPNEKDEYACRVNHVTLSGPRTVKWDRDM.

An N-terminal signal peptide occupies residues 1–20 (MSPSVALAVLALLSLSGLEA). In terms of domain architecture, Ig-like C1-type spans 25–114 (PKIQVYSRHP…VTLSGPRTVK (90 aa)). Residues Cys45 and Cys100 are joined by a disulfide bond.

It belongs to the beta-2-microglobulin family. Heterodimer of an alpha chain and a beta chain. Beta-2-microglobulin is the beta-chain of major histocompatibility complex class I molecules.

The protein resides in the secreted. Component of the class I major histocompatibility complex (MHC). Involved in the presentation of peptide antigens to the immune system. In Macaca fascicularis (Crab-eating macaque), this protein is Beta-2-microglobulin (B2M).